A 32-amino-acid polypeptide reads, in one-letter code: Cytochrome b6-f complex subunit 7 (32 aa).

Residues 9 to 27 traverse the membrane as a helical segment; that stretch reads AAVFWILIPIGLVGGALLL.

This sequence belongs to the PetM family. In terms of assembly, the 4 large subunits of the cytochrome b6-f complex are cytochrome b6, subunit IV (17 kDa polypeptide, PetD), cytochrome f and the Rieske protein, while the 4 small subunits are PetG, PetL, PetM and PetN. The complex functions as a dimer.

The protein resides in the cellular thylakoid membrane. Its function is as follows. Component of the cytochrome b6-f complex, which mediates electron transfer between photosystem II (PSII) and photosystem I (PSI), cyclic electron flow around PSI, and state transitions. The polypeptide is Cytochrome b6-f complex subunit 7 (Prochlorococcus marinus (strain MIT 9515)).